The chain runs to 485 residues: Glutamyl-tRNA(Gln) amidotransferase subunit A (485 aa).

Active-site charge relay system residues include K76 and S151. The Acyl-ester intermediate role is filled by S175.

It belongs to the amidase family. GatA subfamily. In terms of assembly, heterotrimer of A, B and C subunits.

The catalysed reaction is L-glutamyl-tRNA(Gln) + L-glutamine + ATP + H2O = L-glutaminyl-tRNA(Gln) + L-glutamate + ADP + phosphate + H(+). Its function is as follows. Allows the formation of correctly charged Gln-tRNA(Gln) through the transamidation of misacylated Glu-tRNA(Gln) in organisms which lack glutaminyl-tRNA synthetase. The reaction takes place in the presence of glutamine and ATP through an activated gamma-phospho-Glu-tRNA(Gln). The sequence is that of Glutamyl-tRNA(Gln) amidotransferase subunit A from Methylococcus capsulatus (strain ATCC 33009 / NCIMB 11132 / Bath).